Consider the following 404-residue polypeptide: MFRLSHYLDQLYHPTPPRIARGTPKPVVIWNLTRRCNLKCKHCYTVSADVDFPGELTAAQARETLEDIGRFKVPALILSGGEPLLRDDLFALAKRARALTRVLALSTNGTGVIGSKADRVAEIGFDYVGISIDGIGATNDAFRGVIGAYEQALAGVRSCKRRGIKVGLRFTITEQNESQLPELLKLCDDEGVDKFYLSHLVYAGRGNKNRGEDADHARTRRAMDLLIARALESAEGRGHPLEIVTGNNDADAVYFLNWAKANFPAAQVAHLRKHLEAWGGNASGVGVANIDTQGDVHPDTYWSEYTVGSVKQTPFSELWTGPDPMLAELRRRPRPLKGRCGACAHQAVCGGNTRIRALQLTGDPWAEDPACYLTAAETGTATDIDRLTVRPFIGDRHDPKPAFV.

In terms of domain architecture, Radical SAM core spans Gly-22–Glu-235. Residues Cys-36, Cys-40, Cys-43, Cys-340, Cys-343, Cys-349, and Cys-371 each contribute to the [4Fe-4S] cluster site.

The protein belongs to the radical SAM superfamily. Requires [4Fe-4S] cluster as cofactor.

It participates in porphyrin-containing compound metabolism. Involved in heme d1 biosynthesis. Radical SAM enzyme that catalyzes the removal of two propionate side chains from the intermediate 12,18-didecarboxysiroheme (DDSH) and may introduce the keto functions on rings A and B, yielding the heme d1 precursor dihydro-heme d1. The polypeptide is Pre-heme d1 synthase (Dinoroseobacter shibae (strain DSM 16493 / NCIMB 14021 / DFL 12)).